Here is a 157-residue protein sequence, read N- to C-terminus: Snaclec A16 (157 aa).

A signal peptide spans 1-23; it reads MGRLISVSFGLLVVFLSLSGTGA. Cystine bridges form between Cys-27–Cys-38, Cys-55–Cys-149, and Cys-124–Cys-141. Positions 34-150 constitute a C-type lectin domain; sequence YEGHCYKVFN…CELAYHFICM (117 aa).

Belongs to the snaclec family. In terms of assembly, heterodimer; disulfide-linked. Expressed by the venom gland.

It localises to the secreted. Interferes with one step of hemostasis (modulation of platelet aggregation, or coagulation cascade, for example). The polypeptide is Snaclec A16 (Macrovipera lebetinus (Levantine viper)).